We begin with the raw amino-acid sequence, 587 residues long: Folylpolyglutamate synthase, mitochondrial (587 aa).

A mitochondrion-targeting transit peptide spans 1-42 (MSWARSRLCSTLSLAAVSARGATTEGAARRGMSAWPAPQEPG). 106–109 (GKGS) is a binding site for ATP. Ser-130, Glu-200, and His-228 together coordinate Mg(2+). The ATP site is built by Arg-363 and Asp-377. Ser-539 is modified (phosphoserine).

Belongs to the folylpolyglutamate synthase family. As to quaternary structure, monomer. Requires a monovalent cation as cofactor. As to expression, with non-specific probe, highest content in kidney and liver and lowest in spleen, lung and small intestine, and readily detectable in all of the tumors except hepatoma. Isoform 1 and isoform 2 expressed in leukemic cells and isoform 4 and isoform 5 in liver cells. Isoform 1 and isoform 2 exclusively expressed in hepatoma and Lewis lung carcinoma. Isoform 1 and isoform 2 also expressed in bone marrow, small intestine and spleen. Kidney expresses isoform 1, isoform 2, isoform 4 and isoform 5.

It localises to the mitochondrion inner membrane. The protein localises to the mitochondrion matrix. The protein resides in the cytoplasm. The enzyme catalyses (6S)-5,6,7,8-tetrahydrofolyl-(gamma-L-Glu)(n) + L-glutamate + ATP = (6S)-5,6,7,8-tetrahydrofolyl-(gamma-L-Glu)(n+1) + ADP + phosphate + H(+). It participates in cofactor biosynthesis; tetrahydrofolylpolyglutamate biosynthesis. Its activity is regulated as follows. Inhibited by ammonium sulfate. Inhibited by pentaglutamate derivative of DDATHF, but isoform 2 is inhibited to a greater extent at lower concentrations of the compound that is isoform 5. Isoform 5 is virtually unaffected by H(4)PteGlu(5) and 5,10-CH(2)-H(4)PteGlu(5) at concentrations that substantially inhibits the activity of isoform 2. Isoform 2 and 5 are equally sensitive to polyglutamates of 10-CHO-H(4)-PteGlu. In terms of biological role, catalyzes conversion of folates to polyglutamate derivatives allowing concentration of folate compounds in the cell and the intracellular retention of these cofactors, which are important substrates for most of the folate-dependent enzymes that are involved in one-carbon transfer reactions involved in purine, pyrimidine and amino acid synthesis. Dihydrofolate, tetrahydrofolate, 5,10-methylenetetrahydrofolate, 10-formyltetrahydrofolate and 5-formyltetrahydrofolate are the best substrates. Folic acid and 5-methyltetrahydrofolate can also act as substrates. The polypeptide is Folylpolyglutamate synthase, mitochondrial (Fpgs) (Mus musculus (Mouse)).